Here is a 148-residue protein sequence, read N- to C-terminus: Transcriptional regulator MraZ (148 aa).

SpoVT-AbrB domains lie at 5–53 and 82–125; these read ETAI…AEKE and SAVL…SEQA.

It belongs to the MraZ family. As to quaternary structure, forms oligomers.

It localises to the cytoplasm. It is found in the nucleoid. The polypeptide is Transcriptional regulator MraZ (Xanthomonas axonopodis pv. citri (strain 306)).